Here is a 227-residue protein sequence, read N- to C-terminus: Uracil-DNA glycosylase (227 aa).

D68 serves as the catalytic Proton acceptor.

This sequence belongs to the uracil-DNA glycosylase (UDG) superfamily. UNG family.

The protein resides in the cytoplasm. It catalyses the reaction Hydrolyzes single-stranded DNA or mismatched double-stranded DNA and polynucleotides, releasing free uracil.. Excises uracil residues from the DNA which can arise as a result of misincorporation of dUMP residues by DNA polymerase or due to deamination of cytosine. This is Uracil-DNA glycosylase from Mycolicibacterium paratuberculosis (strain ATCC BAA-968 / K-10) (Mycobacterium paratuberculosis).